The primary structure comprises 463 residues: ATP synthase subunit beta (463 aa).

152 to 159 (GGAGVGKT) is an ATP binding site.

It belongs to the ATPase alpha/beta chains family. In terms of assembly, F-type ATPases have 2 components, CF(1) - the catalytic core - and CF(0) - the membrane proton channel. CF(1) has five subunits: alpha(3), beta(3), gamma(1), delta(1), epsilon(1). CF(0) has three main subunits: a(1), b(2) and c(9-12). The alpha and beta chains form an alternating ring which encloses part of the gamma chain. CF(1) is attached to CF(0) by a central stalk formed by the gamma and epsilon chains, while a peripheral stalk is formed by the delta and b chains.

It is found in the cell inner membrane. The enzyme catalyses ATP + H2O + 4 H(+)(in) = ADP + phosphate + 5 H(+)(out). In terms of biological role, produces ATP from ADP in the presence of a proton gradient across the membrane. The catalytic sites are hosted primarily by the beta subunits. This is ATP synthase subunit beta from Shewanella putrefaciens (strain CN-32 / ATCC BAA-453).